The primary structure comprises 310 residues: Putative F-box protein PP2-B2 (310 aa).

Residues 1–34 (MIQSTMGHKQSVDSRGKGRKVPGSSSMVQKHRVE) are disordered. The 47-residue stretch at 44 to 90 (PSLFDNLPEDCISNIISFTSPRDACVAASVSKTFESAVNSDSVWDKF) folds into the F-box domain.

This Arabidopsis thaliana (Mouse-ear cress) protein is Putative F-box protein PP2-B2 (PP2B2).